Consider the following 705-residue polypeptide: Effector protein AvrPphDPsv (705 aa).

Positions 1 to 15 are enriched in polar residues; sequence MNPLQSIQHNITTPP. 2 disordered regions span residues 1-40 and 175-205; these read MNPL…ISPS and RLET…RRES.

It is found in the secreted. Effector protein involved in non-host recognition. This is Effector protein AvrPphDPsv (avrPphDPsv) from Pseudomonas savastanoi (Pseudomonas syringae pv. savastanoi).